The following is a 268-amino-acid chain: MAAAAFAVPRGVQLRVLTERLLRGGVRELLRPRLSGSTPGSERDFSLSHSRGTVIVERWWKVPLAGEGRKPRLHRRHRVYKLVEDTKHRPKENLELILTQSVDELGVRGDLVSVKKSVGRNRLLPEGLAVYASPENKKLFEEEKLLRQEGKLDKIQTKAGEATVKFLRSCHLEVGMKNNVKWELNPEIVARHFLRNLGVVVAPHALKLPEEPITQRGEYWCEVTVNGLDTVRVPMSVVNFERPKTKRYKYWLAQQAAKGMASTSFQKI.

The N-terminal 52 residues, 1 to 52 (MAAAAFAVPRGVQLRVLTERLLRGGVRELLRPRLSGSTPGSERDFSLSHSRG), are a transit peptide targeting the mitochondrion.

This sequence belongs to the bacterial ribosomal protein bL9 family. As to quaternary structure, component of the mitochondrial ribosome large subunit (39S) which comprises a 16S rRNA and about 50 distinct proteins.

Its subcellular location is the mitochondrion. In Bos taurus (Bovine), this protein is Large ribosomal subunit protein bL9m (MRPL9).